The chain runs to 107 residues: MILMFDMPTDTAEERKAYRKFRKFLLSEGFIMHQFSVYSKLLLNNSANTAMIARLKENNPKKGNITLLTVTEKQFARMIYLNGERDTSIANSDSRLVFLGEAFPDET.

Position 6 (D6) interacts with Mg(2+).

The protein belongs to the CRISPR-associated endoribonuclease Cas2 protein family. As to quaternary structure, homodimer, forms a heterotetramer with a Cas1 homodimer. The cofactor is Mg(2+).

In terms of biological role, CRISPR (clustered regularly interspaced short palindromic repeat), is an adaptive immune system that provides protection against mobile genetic elements (viruses, transposable elements and conjugative plasmids). CRISPR clusters contain sequences complementary to antecedent mobile elements and target invading nucleic acids. CRISPR clusters are transcribed and processed into CRISPR RNA (crRNA). Functions as a ssRNA-specific endoribonuclease. Involved in the integration of spacer DNA into the CRISPR cassette. This Streptococcus mutans serotype c (strain NN2025) protein is CRISPR-associated endoribonuclease Cas2.